Consider the following 101-residue polypeptide: Small ribosomal subunit protein bS18c (101 aa).

Over residues 1–19 the composition is skewed to basic residues; it reads MDKSKRLFRKSKRSFRRRL. The interval 1-23 is disordered; sequence MDKSKRLFRKSKRSFRRRLPPIG.

The protein belongs to the bacterial ribosomal protein bS18 family. Part of the 30S ribosomal subunit.

It is found in the plastid. The protein resides in the chloroplast. The sequence is that of Small ribosomal subunit protein bS18c from Liriodendron tulipifera (Tuliptree).